The chain runs to 182 residues: Isopentenyl-diphosphate Delta-isomerase (182 aa).

The Mn(2+) site is built by histidine 25 and histidine 32. A Nudix hydrolase domain is found at 30–164; the sequence is LLHLAFSSWL…PWAFSPWMVM (135 aa). Cysteine 67 is a catalytic residue. Histidine 69 contacts Mn(2+). Residue glutamate 87 participates in Mg(2+) binding. Glutamate 114 and glutamate 116 together coordinate Mn(2+). Glutamate 116 is a catalytic residue.

This sequence belongs to the IPP isomerase type 1 family. As to quaternary structure, homodimer. The cofactor is Mg(2+). Requires Mn(2+) as cofactor.

The protein localises to the cytoplasm. It carries out the reaction isopentenyl diphosphate = dimethylallyl diphosphate. Its pathway is isoprenoid biosynthesis; dimethylallyl diphosphate biosynthesis; dimethylallyl diphosphate from isopentenyl diphosphate: step 1/1. Functionally, catalyzes the 1,3-allylic rearrangement of the homoallylic substrate isopentenyl (IPP) to its highly electrophilic allylic isomer, dimethylallyl diphosphate (DMAPP). This chain is Isopentenyl-diphosphate Delta-isomerase, found in Escherichia coli O7:K1 (strain IAI39 / ExPEC).